Consider the following 115-residue polypeptide: MNNIIKQIEQEQMKQDVPAFRPGDSVEVKVWVVEGSKKRLQAFEGVVIAIRNRGLHSAFTVRKISNGEGVERVFQTHSPVIDSIAVKRRGAVRKAKLYYLRERTGKAARIKERLN.

The protein belongs to the bacterial ribosomal protein bL19 family.

In terms of biological role, this protein is located at the 30S-50S ribosomal subunit interface and may play a role in the structure and function of the aminoacyl-tRNA binding site. This is Large ribosomal subunit protein bL19 from Edwardsiella ictaluri (strain 93-146).